Here is a 254-residue protein sequence, read N- to C-terminus: 3-deoxy-manno-octulosonate cytidylyltransferase (254 aa).

Belongs to the KdsB family.

The protein localises to the cytoplasm. The catalysed reaction is 3-deoxy-alpha-D-manno-oct-2-ulosonate + CTP = CMP-3-deoxy-beta-D-manno-octulosonate + diphosphate. It participates in nucleotide-sugar biosynthesis; CMP-3-deoxy-D-manno-octulosonate biosynthesis; CMP-3-deoxy-D-manno-octulosonate from 3-deoxy-D-manno-octulosonate and CTP: step 1/1. It functions in the pathway bacterial outer membrane biogenesis; lipopolysaccharide biosynthesis. Activates KDO (a required 8-carbon sugar) for incorporation into bacterial lipopolysaccharide in Gram-negative bacteria. This chain is 3-deoxy-manno-octulosonate cytidylyltransferase, found in Bordetella petrii (strain ATCC BAA-461 / DSM 12804 / CCUG 43448).